Consider the following 105-residue polypeptide: Large ribosomal subunit protein bL21 (105 aa).

The protein belongs to the bacterial ribosomal protein bL21 family. Part of the 50S ribosomal subunit. Contacts protein L20.

Functionally, this protein binds to 23S rRNA in the presence of protein L20. The chain is Large ribosomal subunit protein bL21 from Thermotoga maritima (strain ATCC 43589 / DSM 3109 / JCM 10099 / NBRC 100826 / MSB8).